The sequence spans 537 residues: Protein swallow (537 aa).

The disordered stretch occupies residues 344–406 (QPNAGKPKKN…SESSHPSSND (63 aa)). 2 stretches are compositionally biased toward low complexity: residues 371 to 383 (NGNG…HSSS) and 392 to 406 (AAPN…SSND).

In terms of assembly, may be constituted of a homo- or heterodimer.

Its subcellular location is the nucleus. Has a role in localizing bicoid mRNA at the anterior margin of the oocyte during oogenesis, and a poorly characterized role in nuclear divisions in early embryogenesis. In Drosophila pseudoobscura pseudoobscura (Fruit fly), this protein is Protein swallow (swa).